The chain runs to 86 residues: Neurotoxin 8-related gene product 1/2/3 (86 aa).

A signal peptide spans 1–19 (MNYLTMISLALLVMTGVES). The LCN-type CS-alpha/beta domain maps to 22–84 (RDAYIADNKN…VPIKVPGKCN (63 aa)). 4 disulfides stabilise this stretch: Cys32–Cys83, Cys36–Cys56, Cys42–Cys66, and Cys46–Cys68. Asn84 carries the asparagine amide modification.

Belongs to the long (4 C-C) scorpion toxin superfamily. Sodium channel inhibitor family. Alpha subfamily. Expressed by the venom gland.

It is found in the secreted. Binds voltage-dependently at site-3 of sodium channels (Nav) and inhibits the inactivation of the activated channels, thereby blocking neuronal transmission. The sequence is that of Neurotoxin 8-related gene product 1/2/3 (NTVIIIrgp1) from Androctonus mauritanicus mauritanicus (Scorpion).